Here is a 246-residue protein sequence, read N- to C-terminus: Uridylate kinase (246 aa).

18-21 (KLSG) provides a ligand contact to ATP. G60 contributes to the UMP binding site. 2 residues coordinate ATP: G61 and R65. UMP-binding positions include D80 and 141 to 148 (TGNPFFTT). ATP-binding residues include T168, Y174, and D177.

It belongs to the UMP kinase family. Homohexamer.

It is found in the cytoplasm. The catalysed reaction is UMP + ATP = UDP + ADP. It functions in the pathway pyrimidine metabolism; CTP biosynthesis via de novo pathway; UDP from UMP (UMPK route): step 1/1. Its activity is regulated as follows. Inhibited by UTP. In terms of biological role, catalyzes the reversible phosphorylation of UMP to UDP. In Pseudomonas syringae pv. syringae (strain B728a), this protein is Uridylate kinase.